The primary structure comprises 196 residues: Orotate phosphoribosyltransferase (196 aa).

Residues R102, K103, K106, H108, and 129–137 (EDVVTTGGS) contribute to the 5-phospho-alpha-D-ribose 1-diphosphate site. Orotate is bound by residues T133 and R161.

This sequence belongs to the purine/pyrimidine phosphoribosyltransferase family. PyrE subfamily. In terms of assembly, homodimer. The cofactor is Mg(2+).

The enzyme catalyses orotidine 5'-phosphate + diphosphate = orotate + 5-phospho-alpha-D-ribose 1-diphosphate. Its pathway is pyrimidine metabolism; UMP biosynthesis via de novo pathway; UMP from orotate: step 1/2. In terms of biological role, catalyzes the transfer of a ribosyl phosphate group from 5-phosphoribose 1-diphosphate to orotate, leading to the formation of orotidine monophosphate (OMP). The protein is Orotate phosphoribosyltransferase of Prochlorococcus marinus (strain MIT 9303).